Consider the following 356-residue polypeptide: MTRPIQASLDLQALKQNLSIVRQAAPHARVWSVVKANAYGHGIERIWSALGATDGFALLNLEEAITLRERGWKGPILMLEGFFHAQDLEMYDQHRLTTCVHSNWQLKALQNARLKAPLDIYLKVNSGMNRLGFQPDRVLTVWQQLRAMANVGEMTLMSHFAEAEHPDGISGAMARIEQAAEGLECRRSLSNSAATLWHPEAHFDWVRPGIILYGASPSGQWRDIANTGLRPVMTLSSEIIGVQTLKAGERVGYGGRYTARDEQRIGIVAAGYADGYPRHAPTGTPVLVDGVRTMTVGTVSMDMLAVDLTPCPQAGIGTPVELWGKEIKIDDVAAAAGTVGYELMCALALRVPVVTV.

Catalysis depends on K35, which acts as the Proton acceptor; specific for D-alanine. K35 bears the N6-(pyridoxal phosphate)lysine mark. Position 130 (R130) interacts with substrate. The active-site Proton acceptor; specific for L-alanine is Y253. Residue M301 participates in substrate binding.

Belongs to the alanine racemase family. The cofactor is pyridoxal 5'-phosphate.

The enzyme catalyses L-alanine = D-alanine. Its function is as follows. Isomerizes L-alanine to D-alanine which is then oxidized to pyruvate by DadA. This is Alanine racemase, catabolic (dadX) from Escherichia coli O157:H7.